Reading from the N-terminus, the 179-residue chain is Large ribosomal subunit protein uL6 (179 aa).

This sequence belongs to the universal ribosomal protein uL6 family. In terms of assembly, part of the 50S ribosomal subunit.

Its function is as follows. This protein binds to the 23S rRNA, and is important in its secondary structure. It is located near the subunit interface in the base of the L7/L12 stalk, and near the tRNA binding site of the peptidyltransferase center. The sequence is that of Large ribosomal subunit protein uL6 from Acidothermus cellulolyticus (strain ATCC 43068 / DSM 8971 / 11B).